Reading from the N-terminus, the 133-residue chain is Large-conductance mechanosensitive channel (133 aa).

2 consecutive transmembrane segments (helical) span residues 19-39 (IDLA…TSLV) and 79-99 (IQSV…VKLI).

Belongs to the MscL family. Homopentamer.

The protein localises to the cell membrane. Functionally, channel that opens in response to stretch forces in the membrane lipid bilayer. May participate in the regulation of osmotic pressure changes within the cell. The protein is Large-conductance mechanosensitive channel of Clostridium tetani (strain Massachusetts / E88).